A 419-amino-acid chain; its full sequence is Queuine tRNA-ribosyltransferase accessory subunit 2 (419 aa).

4 residues coordinate Zn(2+): C326, C328, C331, and H357.

This sequence belongs to the queuine tRNA-ribosyltransferase family. QTRT2 subfamily. In terms of assembly, heterodimer of a catalytic subunit and an accessory subunit. Requires Zn(2+) as cofactor.

The protein resides in the cytoplasm. Functionally, non-catalytic subunit of the queuine tRNA-ribosyltransferase (TGT) that catalyzes the base-exchange of a guanine (G) residue with queuine (Q) at position 34 (anticodon wobble position) in tRNAs with GU(N) anticodons (tRNA-Asp, -Asn, -His and -Tyr), resulting in the hypermodified nucleoside queuosine (7-(((4,5-cis-dihydroxy-2-cyclopenten-1-yl)amino)methyl)-7-deazaguanosine). In Drosophila grimshawi (Hawaiian fruit fly), this protein is Queuine tRNA-ribosyltransferase accessory subunit 2.